Reading from the N-terminus, the 631-residue chain is Anthrax toxin receptor-like (631 aa).

The N-terminal stretch at 1–27 is a signal peptide; sequence MGSHESLGPYFLVFLLLLLLPPPLFRA. The Extracellular segment spans residues 28–353; sequence GSLRYHGPDW…TSTTCGIFRN (326 aa). The VWFA domain occupies 76 to 246; it reads DLYFILDKSG…KALRSTIDAL (171 aa). Residues S84, S86, and T150 each contribute to the a divalent metal cation site. The helical transmembrane segment at 354–374 threads the bilayer; it reads WLYFVPLLLLVPLLLCCVWRL. The Cytoplasmic segment spans residues 375-631; sequence CRKQTVKEPP…LSLPPSEPNF (257 aa). Residues 382–413 form a disordered region; that stretch reads EPPPVQKPEKEPEQEKPPSPPPPPPPPPPPLP. Positions 388–397 are enriched in basic and acidic residues; sequence KPEKEPEQEK. Residues 398-413 are compositionally biased toward pro residues; that stretch reads PPSPPPPPPPPPPPLP.

It belongs to the ATR family.

It localises to the membrane. The sequence is that of Anthrax toxin receptor-like (ANTXRL) from Homo sapiens (Human).